The sequence spans 141 residues: Large ribosomal subunit protein bL17 (141 aa).

This sequence belongs to the bacterial ribosomal protein bL17 family. In terms of assembly, part of the 50S ribosomal subunit. Contacts protein L32.

The protein is Large ribosomal subunit protein bL17 of Sinorhizobium fredii (strain NBRC 101917 / NGR234).